The chain runs to 598 residues: MALRCPIVSVLGHVDHGKTSLLDKIRSTRVTQREAGGITQHIGASEIPINTIKKVSKDLLGLFNANLSIPGLLVIDTPGHEAFTSLRKRGGALADIAILVVDINEGFKPQTIEAINILKQCKTPFVVAANKLDRIPGWSSSNGPFILNFNEKVQHPNAMTEFEIRLYENVIKHLNELGFDADLFSRVKDTTRTINVVPVSAITGEGVPDLLIIIAGLAQKFLEQKLALNVEGYAKGTVLEVKEEKGLGRTIDAIIYDGIARTGDYIVIGNPDGIVTSKVKALLKPKELDEMRDPKDKFKPSREISAATGVKISAPELEMVVSGSPLRIVPKEHINKAMDEITEEIEEFTIKTDEEGIIIKADTMGSLEAIANELRKAKANIKKAEVGDVSKKDIIEASSYSSSDPLNGLIISFNTKTLPDAKLELEKTDVKLLEGKIIYKLVEDYGAWLKEMEELLKSDELNKLTKPAMIKILPNCIFRQKGPAVCGVEILYGTLKIGSHIMSDDGKKLGYVKEIRNNQQENIKEAKVGMQVPVSIDGNMILGRNAKENDILYVEVSEPEVRKLYHIYKDELRGDEKEALLRYMELKQKLEKSIFWGM.

One can recognise a tr-type G domain in the interval 3–225 (LRCPIVSVLG…GLAQKFLEQK (223 aa)). Positions 12–19 (GHVDHGKT) are G1. Residue 12 to 19 (GHVDHGKT) coordinates GTP. The tract at residues 37–41 (GITQH) is G2. Residues 76–79 (DTPG) are G3. GTP contacts are provided by residues 76 to 80 (DTPGH) and 130 to 133 (NKLD). The interval 130-133 (NKLD) is G4. The segment at 200-202 (SAI) is G5.

The protein belongs to the TRAFAC class translation factor GTPase superfamily. Classic translation factor GTPase family. IF-2 subfamily.

Its function is as follows. Function in general translation initiation by promoting the binding of the formylmethionine-tRNA to ribosomes. Seems to function along with eIF-2. This chain is Probable translation initiation factor IF-2, found in Methanococcus vannielii (strain ATCC 35089 / DSM 1224 / JCM 13029 / OCM 148 / SB).